Reading from the N-terminus, the 214-residue chain is MKFFIDTADVKEIREAHELGVVDGVTTNPSLIAKSGRKFADVIKEITSIVDGPISAEVVALDHDGMIKEAEELVKIHPNIVIKLPMTTEGLKATKTLHGEGIKTNVTLIFSPMQALLAAKAGASYVSPFVGRLDDISQDGMGIVEEIRTIFDNYGYTTEIIVASVRNPVHVLNSALIGADVATIPYSVIMQLAKHPLTDAGIKKFLEDWEKVPK.

The active-site Schiff-base intermediate with substrate is the lysine 83.

Belongs to the transaldolase family. Type 3B subfamily.

Its subcellular location is the cytoplasm. It catalyses the reaction D-sedoheptulose 7-phosphate + D-glyceraldehyde 3-phosphate = D-erythrose 4-phosphate + beta-D-fructose 6-phosphate. Its pathway is carbohydrate degradation; pentose phosphate pathway; D-glyceraldehyde 3-phosphate and beta-D-fructose 6-phosphate from D-ribose 5-phosphate and D-xylulose 5-phosphate (non-oxidative stage): step 2/3. In terms of biological role, transaldolase is important for the balance of metabolites in the pentose-phosphate pathway. The sequence is that of Probable transaldolase from Geotalea uraniireducens (strain Rf4) (Geobacter uraniireducens).